We begin with the raw amino-acid sequence, 101 residues long: Enhancer of yellow 2 transcription factor (101 aa).

It belongs to the ENY2 family. Component of the nuclear pore complex (NPC)-associated AMEX complex (anchoring and mRNA export complex), composed of at least e(y)2 and xmas-2. Component of the SAGA transcription coactivator-HAT complexes, at least composed of Ada2b, e(y)2, Pcaf/Gcn5, Taf10 and Nipped-A/Trrap. Within the SAGA complex, e(y)2, Sgf11, and not/nonstop form an additional subcomplex of SAGA called the DUB module (deubiquitination module). Component of the THO complex, composed of at least e(y)2, HPR1, THO2, THOC5, THOC6 and THOC7. Interacts with e(y)1. Interacts with su(Hw) (via zinc fingers). Interacts with xmas-2; required for localization to the nuclear periphery. Interacts with the nuclear pore complex (NPC).

It localises to the nucleus. The protein resides in the nucleoplasm. It is found in the cytoplasm. Its function is as follows. Involved in mRNA export coupled transcription activation by association with both the AMEX and the SAGA complexes. The SAGA complex is a multiprotein complex that activates transcription by remodeling chromatin and mediating histone acetylation and deubiquitination. Within the SAGA complex, participates in a subcomplex that specifically deubiquitinates histone H2B. The SAGA complex is recruited to specific gene promoters by activators, where it is required for transcription. Required for nuclear receptor-mediated transactivation. Involved in transcription elongation by recruiting the THO complex onto nascent mRNA. The AMEX complex functions in docking export-competent ribonucleoprotein particles (mRNPs) to the nuclear entrance of the nuclear pore complex (nuclear basket). AMEX participates in mRNA export and accurate chromatin positioning in the nucleus by tethering genes to the nuclear periphery. This Drosophila sechellia (Fruit fly) protein is Enhancer of yellow 2 transcription factor.